Consider the following 319-residue polypeptide: Acetyl esterase (319 aa).

The Involved in the stabilization of the negatively charged intermediate by the formation of the oxyanion hole motif lies at 91–93 (HGG). Residues Ser-165, Asp-262, and His-292 contribute to the active site.

Belongs to the 'GDXG' lipolytic enzyme family. In terms of assembly, homodimer. Interacts with MalT and MelA.

Its subcellular location is the cytoplasm. Displays esterase activity towards short chain fatty esters (acyl chain length of up to 8 carbons). Able to hydrolyze triacetylglycerol (triacetin) and tributyrylglycerol (tributyrin), but not trioleylglycerol (triolein) or cholesterol oleate. Negatively regulates MalT activity by antagonizing maltotriose binding. Inhibits MelA galactosidase activity. The sequence is that of Acetyl esterase from Escherichia coli (strain ATCC 8739 / DSM 1576 / NBRC 3972 / NCIMB 8545 / WDCM 00012 / Crooks).